A 96-amino-acid polypeptide reads, in one-letter code: Protein Vpr (96 aa).

The tract at residues 1 to 42 (MEQAPEDQGPQREPYNEWTLELLEELKNEAVRHFPRPWLHGL) is homooligomerization. Phosphoserine; by host is present on Ser-79.

This sequence belongs to the HIV-1 VPR protein family. In terms of assembly, homooligomer, may form homodimer. Interacts with p6-gag region of the Pr55 Gag precursor protein through a (Leu-X-X)4 motif near the C-terminus of the P6gag protein. Interacts with host UNG. May interact with host RAD23A/HHR23A. Interacts with host VPRBP/DCAF1, leading to hijack the CUL4A-RBX1-DDB1-DCAF1/VPRBP complex, mediating ubiquitination of host proteins such as TERT and ZGPAT and arrest of the cell cycle in G2 phase. Phosphorylated on several residues by host. These phosphorylations regulate VPR activity for the nuclear import of the HIV-1 pre-integration complex.

It is found in the virion. Its subcellular location is the host nucleus. The protein localises to the host extracellular space. Its function is as follows. During virus replication, may deplete host UNG protein, and incude G2-M cell cycle arrest. Acts by targeting specific host proteins for degradation by the 26S proteasome, through association with the cellular CUL4A-DDB1 E3 ligase complex by direct interaction with host VPRPB/DCAF-1. Cell cycle arrest reportedly occurs within hours of infection and is not blocked by antiviral agents, suggesting that it is initiated by the VPR carried into the virion. Additionally, VPR induces apoptosis in a cell cycle dependent manner suggesting that these two effects are mechanistically linked. Detected in the serum and cerebrospinal fluid of AIDS patient, VPR may also induce cell death to bystander cells. Functionally, during virus entry, plays a role in the transport of the viral pre-integration (PIC) complex to the host nucleus. This function is crucial for viral infection of non-dividing macrophages. May act directly at the nuclear pore complex, by binding nucleoporins phenylalanine-glycine (FG)-repeat regions. This is Protein Vpr from Human immunodeficiency virus type 1 group M subtype G (isolate 92NG083) (HIV-1).